The following is a 489-amino-acid chain: Valine--tRNA ligase (489 aa).

Residues 482–486 (KMSKS) carry the 'KMSKS' region motif. K485 lines the ATP pocket.

This sequence belongs to the class-I aminoacyl-tRNA synthetase family.

It carries out the reaction tRNA(Val) + L-valine + ATP = L-valyl-tRNA(Val) + AMP + diphosphate. In Trichomonas vaginalis, this protein is Valine--tRNA ligase (VALS).